A 628-amino-acid polypeptide reads, in one-letter code: Ribosome assembly protein RSM22, mitochondrial (628 aa).

The transit peptide at 1–15 directs the protein to the mitochondrion; it reads MMKRCFSILPQNVRF. Cys373, Cys379, Cys400, and Cys513 together coordinate [4Fe-4S] cluster.

The protein belongs to the methyltransferase superfamily. Rsm22 family. In terms of assembly, associates with the mitochondrial ribosome (mitoribosome). Only transiently interacts with the mitoribosome.

It localises to the mitochondrion. Mitochondrial ribosome (mitoribosome) assembly factor. Binds at the interface of the head and body domains of the mitochondrial small ribosomal subunit (mt-SSU), occluding the mRNA channel and preventing compaction of the head domain towards the body. Probable inactive methyltransferase: retains the characteristic folding and ability to bind S-adenosyl-L-methionine, but it probably lost its methyltransferase activity. The sequence is that of Ribosome assembly protein RSM22, mitochondrial (RSM22) from Saccharomyces cerevisiae (strain ATCC 204508 / S288c) (Baker's yeast).